Consider the following 314-residue polypeptide: Leucine-rich repeat-containing protein 59 (314 aa).

Residues 1–247 lie on the Cytoplasmic side of the membrane; it reads MNKGKIENIK…VPKAKRSICS (247 aa). LRR repeat units follow at residues 14-35, 38-60, 61-82, 84-106, and 107-126; these read DGNELDLSLSNLTEVPVKELAA, KATFLDLSCNNLITLTPEFCSLT, HLIKIDLNKNQLVCLPEEIGQL, NLQHLDLYNNKLKMLPIGFSQLK, and SLKWLDLKDNPLEPTLAKAA. Residues 146 to 216 are a coiled coil; that stretch reads MKVLQEEAEK…AVAAQEQQKK (71 aa). 2 disordered regions span residues 165–197 and 212–237; these read REQEKKKEAKQREKEAREKEAQKKKKAEEKERK and EQQKKKKEEKKKKAAQNQGKKAAPES. Positions 215-225 are enriched in basic residues; the sequence is KKKKEEKKKKA. The chain crosses the membrane as a helical span at residues 248 to 268; the sequence is LFFSLLLKLVLLLVIGVSSVV. The Lumenal segment spans residues 269 to 314; sequence AVCQLTELRKEAFCIPLNVHFEETVRWAQGLDVVQQVIQKMSDLRT.

Interacts with SGO1.

The protein localises to the microsome membrane. Its subcellular location is the endoplasmic reticulum membrane. It is found in the nucleus envelope. In terms of biological role, required for nuclear import of FGF1. The polypeptide is Leucine-rich repeat-containing protein 59 (lrrc59) (Danio rerio (Zebrafish)).